The primary structure comprises 67 residues: Andropin (67 aa).

The N-terminal stretch at 1 to 19 (MKYFLVLVVLTLILAISVG) is a signal peptide.

It belongs to the andropin family. In terms of tissue distribution, ejaculatory duct of adult males.

The protein localises to the secreted. In terms of biological role, male-specific peptide with moderate activity against Gram-positive bacteria. This chain is Andropin (Anp), found in Drosophila orena (Fruit fly).